The sequence spans 291 residues: Urease accessory protein UreD (291 aa).

The protein belongs to the UreD family. As to quaternary structure, ureD, UreF and UreG form a complex that acts as a GTP-hydrolysis-dependent molecular chaperone, activating the urease apoprotein by helping to assemble the nickel containing metallocenter of UreC. The UreE protein probably delivers the nickel.

Its subcellular location is the cytoplasm. Required for maturation of urease via the functional incorporation of the urease nickel metallocenter. This is Urease accessory protein UreD from Acinetobacter baumannii (strain SDF).